The primary structure comprises 186 residues: CASP-like protein 4C2 (186 aa).

The Cytoplasmic portion of the chain corresponds to 1–31 (MRSPQPHRSGGDTQQHFQSTVSVQKLKRFNS). Residues 32-52 (LILVFRFAAFCFSLASAVFML) traverse the membrane as a helical segment. Residues 53–71 (TNSRGSDSLHWYNFDAFRY) are Extracellular-facing. A helical transmembrane segment spans residues 72–92 (VFAANAIVAIYSLFEMAASVW). The Cytoplasmic segment spans residues 93–103 (EISRNATLFPE). The helical transmembrane segment at 104-124 (ICQVWFDFGHDQVFAYLLLSA) threads the bilayer. Over 125–150 (NTAGTELARTLKDTCTDNKAFCVQSD) the chain is Extracellular. The chain crosses the membrane as a helical span at residues 151-171 (IAIVLGFAGFLFLGISSLFSG). Over 172 to 186 (FRVVCFIINGSRFYV) the chain is Cytoplasmic.

It belongs to the Casparian strip membrane proteins (CASP) family. As to quaternary structure, homodimer and heterodimers.

The protein resides in the cell membrane. This Populus trichocarpa (Western balsam poplar) protein is CASP-like protein 4C2.